The chain runs to 241 residues: Glucosamine-6-phosphate deaminase (241 aa).

The active-site Proton acceptor; for enolization step is Asp-67. Asn-136 functions as the For ring-opening step in the catalytic mechanism. Catalysis depends on His-138, which acts as the Proton acceptor; for ring-opening step. The active-site For ring-opening step is Glu-143.

Belongs to the glucosamine/galactosamine-6-phosphate isomerase family. NagB subfamily.

The catalysed reaction is alpha-D-glucosamine 6-phosphate + H2O = beta-D-fructose 6-phosphate + NH4(+). Its pathway is amino-sugar metabolism; N-acetylneuraminate degradation; D-fructose 6-phosphate from N-acetylneuraminate: step 5/5. In terms of biological role, catalyzes the reversible isomerization-deamination of glucosamine 6-phosphate (GlcN6P) to form fructose 6-phosphate (Fru6P) and ammonium ion. This chain is Glucosamine-6-phosphate deaminase, found in Clostridium acetobutylicum (strain ATCC 824 / DSM 792 / JCM 1419 / IAM 19013 / LMG 5710 / NBRC 13948 / NRRL B-527 / VKM B-1787 / 2291 / W).